A 160-amino-acid polypeptide reads, in one-letter code: Dihydrofolate reductase (160 aa).

The DHFR domain maps to M1–Q160. I5–A7 serves as a coordination point for substrate. NADP(+) is bound by residues W6–A7 and I14–T19. Residue E27 coordinates substrate. Position 43–46 (G43–T46) interacts with NADP(+). R57 is a substrate binding site. NADP(+) is bound by residues L62 to D65 and C101 to V106. S120 is a binding site for substrate.

It belongs to the dihydrofolate reductase family.

It carries out the reaction (6S)-5,6,7,8-tetrahydrofolate + NADP(+) = 7,8-dihydrofolate + NADPH + H(+). The protein operates within cofactor biosynthesis; tetrahydrofolate biosynthesis; 5,6,7,8-tetrahydrofolate from 7,8-dihydrofolate: step 1/1. Functionally, key enzyme in folate metabolism. Catalyzes an essential reaction for de novo glycine and purine synthesis, and for DNA precursor synthesis. The polypeptide is Dihydrofolate reductase (folA) (Mycoplasma genitalium (strain ATCC 33530 / DSM 19775 / NCTC 10195 / G37) (Mycoplasmoides genitalium)).